The following is a 196-amino-acid chain: Carnitine operon protein CaiE (196 aa).

The segment at 176–196 (LRQMEENRPRLQGTTDVAPKR) is disordered.

Belongs to the transferase hexapeptide repeat family.

Its pathway is amine and polyamine metabolism; carnitine metabolism. Its function is as follows. Overproduction of CaiE stimulates the activity of CaiB and CaiD. The polypeptide is Carnitine operon protein CaiE (Escherichia fergusonii (strain ATCC 35469 / DSM 13698 / CCUG 18766 / IAM 14443 / JCM 21226 / LMG 7866 / NBRC 102419 / NCTC 12128 / CDC 0568-73)).